A 317-amino-acid polypeptide reads, in one-letter code: Beta-ketoacyl-[acyl-carrier-protein] synthase III (317 aa).

Residues cysteine 112 and histidine 244 contribute to the active site. Residues 245–249 (QANLR) form an ACP-binding region. Residue asparagine 274 is part of the active site.

It belongs to the thiolase-like superfamily. FabH family. In terms of assembly, homodimer.

Its subcellular location is the cytoplasm. The catalysed reaction is malonyl-[ACP] + acetyl-CoA + H(+) = 3-oxobutanoyl-[ACP] + CO2 + CoA. It functions in the pathway lipid metabolism; fatty acid biosynthesis. Catalyzes the condensation reaction of fatty acid synthesis by the addition to an acyl acceptor of two carbons from malonyl-ACP. Catalyzes the first condensation reaction which initiates fatty acid synthesis and may therefore play a role in governing the total rate of fatty acid production. Possesses both acetoacetyl-ACP synthase and acetyl transacylase activities. Its substrate specificity determines the biosynthesis of branched-chain and/or straight-chain of fatty acids. The protein is Beta-ketoacyl-[acyl-carrier-protein] synthase III of Sodalis glossinidius (strain morsitans).